A 731-amino-acid polypeptide reads, in one-letter code: 1,4-alpha-glucan branching enzyme GlgB (731 aa).

Asp-411 functions as the Nucleophile in the catalytic mechanism. The Proton donor role is filled by Glu-464.

It belongs to the glycosyl hydrolase 13 family. GlgB subfamily. Monomer.

The enzyme catalyses Transfers a segment of a (1-&gt;4)-alpha-D-glucan chain to a primary hydroxy group in a similar glucan chain.. It functions in the pathway glycan biosynthesis; glycogen biosynthesis. Its function is as follows. Catalyzes the formation of the alpha-1,6-glucosidic linkages in glycogen by scission of a 1,4-alpha-linked oligosaccharide from growing alpha-1,4-glucan chains and the subsequent attachment of the oligosaccharide to the alpha-1,6 position. This chain is 1,4-alpha-glucan branching enzyme GlgB, found in Mycobacterium ulcerans (strain Agy99).